The chain runs to 492 residues: Catalase isozyme 1 (492 aa).

Active-site residues include H65 and N138. Position 348 (Y348) interacts with heme.

It belongs to the catalase family. In terms of assembly, homotetramer. Requires heme as cofactor. In terms of tissue distribution, scutella, milky endosperm of immature kernels, leaves and epicotyls.

The protein resides in the peroxisome. It catalyses the reaction 2 H2O2 = O2 + 2 H2O. In terms of biological role, occurs in almost all aerobically respiring organisms and serves to protect cells from the toxic effects of hydrogen peroxide. The chain is Catalase isozyme 1 (CAT1) from Zea mays (Maize).